Reading from the N-terminus, the 338-residue chain is 1-aminocyclopropane-1-carboxylate deaminase (338 aa).

At lysine 51 the chain carries N6-(pyridoxal phosphate)lysine. Residue serine 78 is the Nucleophile of the active site.

This sequence belongs to the ACC deaminase/D-cysteine desulfhydrase family. Homotrimer. Pyridoxal 5'-phosphate serves as cofactor.

It carries out the reaction 1-aminocyclopropane-1-carboxylate + H2O = 2-oxobutanoate + NH4(+). Its function is as follows. Catalyzes a cyclopropane ring-opening reaction, the irreversible conversion of 1-aminocyclopropane-1-carboxylate (ACC) to ammonia and alpha-ketobutyrate. Allows growth on ACC as a nitrogen source. This Ralstonia pickettii (strain 12J) protein is 1-aminocyclopropane-1-carboxylate deaminase.